The following is an 85-amino-acid chain: Large ribosomal subunit protein bL27 (85 aa).

A disordered region spans residues 1 to 21; that stretch reads MAHKKAGGSSRNGRDSEGRRL.

The protein belongs to the bacterial ribosomal protein bL27 family.

In Rhodospirillum rubrum (strain ATCC 11170 / ATH 1.1.1 / DSM 467 / LMG 4362 / NCIMB 8255 / S1), this protein is Large ribosomal subunit protein bL27.